Consider the following 712-residue polypeptide: Nucleolin (712 aa).

Positions 1–305 (MVKLAKAGKN…KKQKVEGTEP (305 aa)) are disordered. 3 positions are modified to N6-acetyllysine: Lys-9, Lys-15, and Lys-16. Residues 24–43 (VEEDSEDEEMSEDEEDDSSG) are compositionally biased toward acidic residues. Residues Ser-28, Ser-34, Ser-41, and Ser-42 each carry the phosphoserine modification. Residues 56–107 (AAATSAKKVVVSPTKKVAVATPAKKAAVTPGKKAAATPAKKTVTPAKAVTTP) are compositionally biased toward low complexity. Copy 1 of the repeat occupies 58–65 (ATSAKKVV). Residues 58-135 (ATSAKKVVVS…GAAIPAKGAK (78 aa)) are 8 X 8 AA tandem repeats of X-T-P-X-K-K-X-X. Ser-67 is subject to Phosphoserine. 4 positions are modified to phosphothreonine: Thr-69, Thr-76, Thr-84, and Thr-92. 3 consecutive repeat copies span residues 75–82 (ATPAKKAA), 83–90 (VTPGKKAA), and 91–98 (ATPAKKTV). Lys-96 is modified (N6-acetyllysine). Thr-99 bears the Phosphothreonine mark. Residues 99–104 (TPAKAV) form a 5; truncated repeat. At Lys-102 the chain carries N6-acetyllysine. The stretch at 105–112 (TTPGKKGA) is repeat 6. Residue Thr-106 is modified to Phosphothreonine. Lys-109 bears the N6-acetyllysine mark. Position 113 is a phosphothreonine (Thr-113). Lys-116 is modified (N6-acetyllysine). Tandem repeats lie at residues 120–127 (ATPGKKGA) and 128–135 (AIPAKGAK). A Phosphothreonine modification is found at Thr-121. Residues 122–137 (PGKKGAAIPAKGAKNG) show a composition bias toward low complexity. Residue Lys-124 is modified to N6-acetyllysine. Phosphoserine occurs at positions 145 and 153. Acidic residues predominate over residues 145–171 (SDEEEEDDSEEDEDDDEDEDEDEDEIE). Residues 172-183 (PAAMKAAAAAPA) show a composition bias toward low complexity. Phosphoserine is present on residues Ser-184 and Ser-206. Acidic residues predominate over residues 184-211 (SEDEDDEDDEDDEDEDDDEEDDSEEEAM). Thr-214 carries the phosphothreonine modification. A compositionally biased stretch (acidic residues) spans 234–274 (EDEDEEEDDEDEDDDDDDDDDDEDDEDEDDEEEEEEEEEEP). The span at 275 to 302 (VKEAPGKRKKEMAKQKAAPEAKKQKVEG) shows a compositional bias: basic and acidic residues. Lys-299 participates in a covalent cross-link: Glycyl lysine isopeptide (Lys-Gly) (interchain with G-Cter in SUMO1); alternate. Lys-299 is covalently cross-linked (Glycyl lysine isopeptide (Lys-Gly) (interchain with G-Cter in SUMO2); alternate). The residue at position 303 (Thr-303) is a Phosphothreonine. 2 consecutive RRM domains span residues 309-385 (FNLF…KPKG) and 395-468 (RTLL…YTGE). The residue at position 320 (Lys-320) is an N6-acetyllysine. A Glycyl lysine isopeptide (Lys-Gly) (interchain with G-Cter in SUMO1); alternate cross-link involves residue Lys-326. Lys-326 is covalently cross-linked (Glycyl lysine isopeptide (Lys-Gly) (interchain with G-Cter in SUMO2); alternate). Lys-350 carries the N6-acetyllysine modification. The residue at position 358 (Ser-358) is a Phosphoserine. Residue Thr-369 is modified to Phosphothreonine. Residue Lys-372 forms a Glycyl lysine isopeptide (Lys-Gly) (interchain with G-Cter in SUMO2) linkage. Lys-379 participates in a covalent cross-link: Glycyl lysine isopeptide (Lys-Gly) (interchain with G-Cter in SUMO2); alternate. Position 379 is an N6-acetyllysine; alternate (Lys-379). N6-acetyllysine is present on residues Lys-400 and Lys-405. Thr-407 is modified (phosphothreonine). An N6-acetyllysine mark is found at Lys-429 and Lys-446. Residues Ser-460 and Ser-462 each carry the phosphoserine modification. N6-acetyllysine occurs at positions 469 and 479. An RRM 3 domain is found at 488 to 562 (KTLVLSNLSY…RAIRLELQGP (75 aa)). Lys-515 is covalently cross-linked (Glycyl lysine isopeptide (Lys-Gly) (interchain with G-Cter in SUMO2); alternate). Lys-515 carries the N6-acetyllysine; alternate modification. Lys-523 is subject to N6-acetyllysine. Residue Ser-565 is modified to Phosphoserine. Position 574 is an N6-acetyllysine (Lys-574). In terms of domain architecture, RRM 4 spans 574–649 (KTLFVKGLSE…NKVTLDWAKP (76 aa)). Lys-579 participates in a covalent cross-link: Glycyl lysine isopeptide (Lys-Gly) (interchain with G-Cter in SUMO2); alternate. Lys-579 bears the N6-acetyllysine; alternate mark. Position 582 is a phosphoserine (Ser-582). Residue Lys-591 forms a Glycyl lysine isopeptide (Lys-Gly) (interchain with G-Cter in SUMO1); alternate linkage. A Glycyl lysine isopeptide (Lys-Gly) (interchain with G-Cter in SUMO2); alternate cross-link involves residue Lys-591. Phosphoserine occurs at positions 593 and 621. Lys-626 participates in a covalent cross-link: Glycyl lysine isopeptide (Lys-Gly) (interchain with G-Cter in SUMO2). The disordered stretch occupies residues 642–712 (VTLDWAKPKG…KPQGKKTKFE (71 aa)). Residue Lys-648 is modified to N6-acetyllysine. Over residues 652 to 698 (EGGFGGRGGGRGGFGGRGGGRGGRGGFGGRGRGGFGGRGGFRGGRGG) the composition is skewed to gly residues. An asymmetric dimethylarginine mark is found at Arg-658, Arg-662, Arg-668, Arg-672, Arg-675, Arg-681, Arg-683, Arg-689, and Arg-693. An Asymmetric dimethylarginine; alternate modification is found at Arg-696. Arg-696 is subject to Omega-N-methylarginine; alternate. The span at 699 to 712 (GGDHKPQGKKTKFE) shows a compositional bias: basic and acidic residues.

As to quaternary structure, identified in a IGF2BP1-dependent mRNP granule complex containing untranslated mRNAs. Component of the SWAP complex that consists of NPM1, NCL/nucleolin, PARP1 and SWAP70. Component of a complex which is at least composed of HTATSF1/Tat-SF1, the P-TEFb complex components CDK9 and CCNT1, RNA polymerase II, SUPT5H, and NCL/nucleolin. Interacts with AICDA. Interacts with APTX. Interacts with C1QBP. Interacts with ERBB4. Interacts (via C-terminus) with FMR1 isoform 6 (via N-terminus). Interacts with GZF1; this interaction is important for nucleolar localization of GZF1. Interacts with NSUN2. Interacts with NVL. Interacts (via N-terminus domain) with SETX. Interacts (via RRM1 and C-terminal RRM4/Arg/Gly-rich domains) with TERT; the interaction is important for nucleolar localization of TERT. Interacts with WDR46. Interacts with ZFP36. Interacts with LRRC34. Interacts with RRP1B. Interacts with HNRNPU; this interaction occurs during mitosis. Interacts with RIOK1; RIOK1 recruits NCL to the PRMT5 for symmetrically methylation. Interacts with ZBTB7B. Interacts with MDK; this interaction promotes NCL clustering and lateral movements of this complex into lipid rafts leading to MDK internalization. Interacts with HDGF. Interacts with ALKBH2. Interacts with IGFBP5; this interaction is necessary for IGFBP5 localization to the nucleus. Interacts with DDX24 (when ubiquitinated); this interaction may be important during ribosome biogenesis. In terms of processing, some glutamate residues are glycylated by TTLL8. This modification occurs exclusively on glutamate residues and results in a glycine chain on the gamma-carboxyl group. Symmetrically methylated by PRMT5.

The protein localises to the nucleus. The protein resides in the nucleolus. It is found in the cytoplasm. In terms of biological role, nucleolin is the major nucleolar protein of growing eukaryotic cells. It is found associated with intranucleolar chromatin and pre-ribosomal particles. It induces chromatin decondensation by binding to histone H1. It is thought to play a role in pre-rRNA transcription and ribosome assembly. May play a role in the process of transcriptional elongation. Binds RNA oligonucleotides with 5'-UUAGGG-3' repeats more tightly than the telomeric single-stranded DNA 5'-TTAGGG-3' repeats. The polypeptide is Nucleolin (NCL) (Pongo abelii (Sumatran orangutan)).